Here is a 368-residue protein sequence, read N- to C-terminus: Alanine racemase (368 aa).

Lys34 serves as the catalytic Proton acceptor; specific for D-alanine. At Lys34 the chain carries N6-(pyridoxal phosphate)lysine. Arg132 contributes to the substrate binding site. The active-site Proton acceptor; specific for L-alanine is the Tyr261. A substrate-binding site is contributed by Met309.

It belongs to the alanine racemase family. Pyridoxal 5'-phosphate is required as a cofactor.

It carries out the reaction L-alanine = D-alanine. Its pathway is amino-acid biosynthesis; D-alanine biosynthesis; D-alanine from L-alanine: step 1/1. In terms of biological role, catalyzes the interconversion of L-alanine and D-alanine. May also act on other amino acids. The polypeptide is Alanine racemase (alr) (Carboxydothermus hydrogenoformans (strain ATCC BAA-161 / DSM 6008 / Z-2901)).